Here is a 645-residue protein sequence, read N- to C-terminus: Threonine--tRNA ligase (645 aa).

The region spanning 1-61 (MPVITLPDGS…SDDAKLSIIT (61 aa)) is the TGS domain. A catalytic region spans residues 243–534 (DHRKLGKKLD…LIEDTEGAFP (292 aa)). Zn(2+)-binding residues include Cys-334, His-385, and His-511.

Belongs to the class-II aminoacyl-tRNA synthetase family. In terms of assembly, homodimer. It depends on Zn(2+) as a cofactor.

The protein localises to the cytoplasm. It catalyses the reaction tRNA(Thr) + L-threonine + ATP = L-threonyl-tRNA(Thr) + AMP + diphosphate + H(+). Its function is as follows. Catalyzes the attachment of threonine to tRNA(Thr) in a two-step reaction: L-threonine is first activated by ATP to form Thr-AMP and then transferred to the acceptor end of tRNA(Thr). Also edits incorrectly charged L-seryl-tRNA(Thr). The protein is Threonine--tRNA ligase of Marinomonas sp. (strain MWYL1).